A 122-amino-acid chain; its full sequence is Large ribosomal subunit protein uL14 (122 aa).

It belongs to the universal ribosomal protein uL14 family. Part of the 50S ribosomal subunit. Forms a cluster with proteins L3 and L19. In the 70S ribosome, L14 and L19 interact and together make contacts with the 16S rRNA in bridges B5 and B8.

Its function is as follows. Binds to 23S rRNA. Forms part of two intersubunit bridges in the 70S ribosome. This is Large ribosomal subunit protein uL14 from Alkalilimnicola ehrlichii (strain ATCC BAA-1101 / DSM 17681 / MLHE-1).